Consider the following 431-residue polypeptide: UDP-N-acetylglucosamine 1-carboxyvinyltransferase (431 aa).

A phosphoenolpyruvate-binding site is contributed by 25–26 (KN). Arg-101 is a UDP-N-acetyl-alpha-D-glucosamine binding site. Cys-125 (proton donor) is an active-site residue. Cys-125 carries the post-translational modification 2-(S-cysteinyl)pyruvic acid O-phosphothioketal. Residues Asp-317 and Ile-339 each coordinate UDP-N-acetyl-alpha-D-glucosamine.

This sequence belongs to the EPSP synthase family. MurA subfamily.

It is found in the cytoplasm. It catalyses the reaction phosphoenolpyruvate + UDP-N-acetyl-alpha-D-glucosamine = UDP-N-acetyl-3-O-(1-carboxyvinyl)-alpha-D-glucosamine + phosphate. The protein operates within cell wall biogenesis; peptidoglycan biosynthesis. Functionally, cell wall formation. Adds enolpyruvyl to UDP-N-acetylglucosamine. This chain is UDP-N-acetylglucosamine 1-carboxyvinyltransferase, found in Thermobifida fusca (strain YX).